Consider the following 611-residue polypeptide: Creatine transporter (611 aa).

Residues 45 to 65 traverse the membrane as a helical segment; that stretch reads FIMSCVGFAVGLGNVWRFPYL. Residues 66–71 lie on the Extracellular side of the membrane; the sequence is CYKNGG. Residues 72–92 traverse the membrane as a helical segment; that stretch reads GVFLIPYLLVAVFGGIPIFFL. The Cytoplasmic segment spans residues 93–122; the sequence is EISLGQFMKAGGINAWNIAPLFKGLGYASM. The helical transmembrane segment at 123-143 threads the bilayer; sequence VIVFFCNTYYILVLTWSSFYL. The Extracellular portion of the chain corresponds to 144–207; sequence VQSFSSPLPW…LSSGLGDVGE (64 aa). 2 N-linked (GlcNAc...) asparagine glycosylation sites follow: Asn157 and Asn171. A helical membrane pass occupies residues 208 to 228; the sequence is IGWELTLCLTATWMLVYFCIW. Residues 229–246 lie on the Cytoplasmic side of the membrane; the sequence is KGVKTSGKVVYVTATFPY. A helical membrane pass occupies residues 247–267; the sequence is IILVILLVRGVTLHGAVQGIV. Residues 268-281 lie on the Extracellular side of the membrane; that stretch reads YYLQPDWGKLGEAQ. Residues 282-302 traverse the membrane as a helical segment; it reads VWIDAGTQIFFSYAIGLGTLT. At 303 to 318 the chain is on the cytoplasmic side; the sequence is ALGSYNQLHNDCYKDA. A helical transmembrane segment spans residues 319-339; sequence FILSLVNSATSFFAGLVVFSI. The Extracellular segment spans residues 340–371; that stretch reads LGFMAVEEGVDISVVAESGPGLAFIAYPKAVT. A helical membrane pass occupies residues 372–392; that stretch reads LMPFPQVWAVLFFIMLLCLGL. At 393-421 the chain is on the cytoplasmic side; sequence GSQFVGVEGFVTAILDLWPSKFSFRYLRE. Residues 422-442 traverse the membrane as a helical segment; sequence VVVAMVICLSFLIDLSMITEG. The Extracellular segment spans residues 443-456; sequence GMYIFQIFDYYSAS. Residues 457–477 traverse the membrane as a helical segment; the sequence is GTTLLWTAFWECVAVAWVYGG. At 478–497 the chain is on the cytoplasmic side; the sequence is DRYLDDLAWMLGYRPWALVK. The chain crosses the membrane as a helical span at residues 498-518; that stretch reads WCWSVITPLVCMGIFTFHLVN. The Extracellular segment spans residues 519-537; the sequence is YKPLTYNKTYTYPWWGEAI. An N-linked (GlcNAc...) asparagine glycan is attached at Asn525. A helical membrane pass occupies residues 538–558; the sequence is GWCLALASMLCVPTTVLYSLS. Residues 559-611 are Cytoplasmic-facing; it reads RGRGSLKERWRKLTTPVWASHHLAYKMAGAKINQPCEGVVSCEEKVVIFESVL.

It belongs to the sodium:neurotransmitter symporter (SNF) (TC 2.A.22) family.

The protein resides in the membrane. Functionally, required for the uptake of creatine. This chain is Creatine transporter, found in Torpedo marmorata (Marbled electric ray).